The primary structure comprises 317 residues: tRNA dimethylallyltransferase (317 aa).

An ATP-binding site is contributed by 21–28 (GPTASGKS). 23–28 (TASGKS) lines the substrate pocket. Residues 46–49 (DSMQ) form an interaction with substrate tRNA region.

Belongs to the IPP transferase family. In terms of assembly, monomer. Mg(2+) is required as a cofactor.

It catalyses the reaction adenosine(37) in tRNA + dimethylallyl diphosphate = N(6)-dimethylallyladenosine(37) in tRNA + diphosphate. Its function is as follows. Catalyzes the transfer of a dimethylallyl group onto the adenine at position 37 in tRNAs that read codons beginning with uridine, leading to the formation of N6-(dimethylallyl)adenosine (i(6)A). This is tRNA dimethylallyltransferase from Nitrobacter hamburgensis (strain DSM 10229 / NCIMB 13809 / X14).